Reading from the N-terminus, the 3354-residue chain is Cadherin-23 (3354 aa).

Residues 1–23 (MGRHVATSCHVAWLLVLISGCWG) form the signal peptide. Topologically, residues 24 to 3064 (QVNRLPFFTN…SVRLPDDMSA (3041 aa)) are extracellular. 27 Cadherin domains span residues 34-132 (HFFD…APTF), 133-236 (HNQP…DPIF), 237-348 (INLP…APEF), 349-460 (NSSE…RPIF), 461-561 (SQPL…VPTF), 562-671 (QKDA…PPTF), 672-784 (SKPA…APYY), 779-890 (KDAP…DPTF), 891-995 (QNLP…TPTF), 996-1102 (FPAV…RPIF), 1103-1208 (LQSS…APVF), 1210-1313 (QQQY…AVQF), 1314-1418 (SNAS…SPRF), 1420-1527 (FTSD…PPVI), 1529-1634 (SPFG…APMF), 1635-1744 (QQPH…VPTF), 1745-1851 (PRDY…DPVL), 1852-1959 (LNLP…HPLF), 1960-2069 (TKST…RPTF), 2070-2174 (SPAT…RPEF), 2175-2293 (LNPI…TPQF), 2297-2402 (GITY…NPIF), 2403-2509 (DQPS…RPQF), 2510-2611 (SKPQ…RPVF), 2614-2722 (PPNG…EPLF), 2729-2846 (SPQY…PPRF), and 2847-2975 (TKAE…EEEF). Residues asparagine 155 and asparagine 206 are each glycosylated (N-linked (GlcNAc...) asparagine). 32 N-linked (GlcNAc...) asparagine glycosylation sites follow: asparagine 349, asparagine 393, asparagine 434, asparagine 466, asparagine 472, asparagine 652, asparagine 694, asparagine 765, asparagine 810, asparagine 827, asparagine 941, asparagine 1001, asparagine 1018, asparagine 1171, asparagine 1282, asparagine 1315, asparagine 1473, asparagine 1534, asparagine 1651, asparagine 1667, asparagine 1818, asparagine 1857, asparagine 1889, asparagine 1902, asparagine 2013, asparagine 2050, asparagine 2129, asparagine 2168, asparagine 2195, asparagine 2263, asparagine 2357, and asparagine 2369. N-linked (GlcNAc...) asparagine glycans are attached at residues asparagine 2616, asparagine 2749, asparagine 2808, asparagine 2877, asparagine 2896, asparagine 2941, and asparagine 2981. A helical transmembrane segment spans residues 3065–3085 (LQMAIIVLAILLFLAAMLFVL). Over 3086-3354 (MNWYYRTVHK…METPLEITEL (269 aa)) the chain is Cytoplasmic.

As to quaternary structure, antiparallel heterodimer with PCDH15. Interacts with USH1C and USH1G. In terms of tissue distribution, particularly strong expression in the retina. Found also in the cochlea.

The protein resides in the cell membrane. In terms of biological role, cadherins are calcium-dependent cell adhesion proteins. They preferentially interact with themselves in a homophilic manner in connecting cells. CDH23 is required for establishing and/or maintaining the proper organization of the stereocilia bundle of hair cells in the cochlea and the vestibule during late embryonic/early postnatal development. It is part of the functional network formed by USH1C, USH1G, CDH23 and MYO7A that mediates mechanotransduction in cochlear hair cells. Required for normal hearing. The polypeptide is Cadherin-23 (Homo sapiens (Human)).